The primary structure comprises 92 residues: Small ribosomal subunit protein uS19c (92 aa).

Belongs to the universal ribosomal protein uS19 family.

It localises to the plastid. Its subcellular location is the chloroplast. Protein S19 forms a complex with S13 that binds strongly to the 16S ribosomal RNA. In Phaeodactylum tricornutum (strain CCAP 1055/1), this protein is Small ribosomal subunit protein uS19c.